An 889-amino-acid polypeptide reads, in one-letter code: Translation initiation factor IF-2 (889 aa).

The segment at 1 to 299 (MTDNKDDKTL…EKFKRSQMQE (299 aa)) is disordered. Residues 61–76 (ITPVAATPAARPAEQR) show a composition bias toward low complexity. A compositionally biased stretch (pro residues) spans 77-93 (PMPPQPSGRPAPQPQPH). Positions 116–182 (MEARRRALAE…EAEKTEEKVE (67 aa)) are enriched in basic and acidic residues. Low complexity predominate over residues 196–215 (RPQPGRAAPAATPAAPDGAA). A compositionally biased stretch (basic and acidic residues) spans 220-231 (RGTESEEDERRR). The tr-type G domain occupies 387-554 (SRPPIVTIMG…AILLQSEILD (168 aa)). The segment at 396–403 (GHVDHGKT) is G1. Position 396–403 (396–403 (GHVDHGKT)) interacts with GTP. The interval 421–425 (GITQH) is G2. Residues 442-445 (DTPG) are G3. GTP contacts are provided by residues 442-446 (DTPGH) and 496-499 (NKID). Positions 496 to 499 (NKID) are G4. A G5 region spans residues 532-534 (SAK).

It belongs to the TRAFAC class translation factor GTPase superfamily. Classic translation factor GTPase family. IF-2 subfamily.

It localises to the cytoplasm. Functionally, one of the essential components for the initiation of protein synthesis. Protects formylmethionyl-tRNA from spontaneous hydrolysis and promotes its binding to the 30S ribosomal subunits. Also involved in the hydrolysis of GTP during the formation of the 70S ribosomal complex. This is Translation initiation factor IF-2 from Rhizobium meliloti (strain 1021) (Ensifer meliloti).